The sequence spans 159 residues: Small ribosomal subunit protein uS9 (159 aa).

Belongs to the universal ribosomal protein uS9 family.

The polypeptide is Small ribosomal subunit protein uS9 (Rickettsia africae (strain ESF-5)).